A 502-amino-acid polypeptide reads, in one-letter code: Probable cytosol aminopeptidase 2 (502 aa).

Mn(2+) contacts are provided by lysine 269 and aspartate 274. Lysine 281 is an active-site residue. Residues aspartate 292, aspartate 351, and glutamate 353 each coordinate Mn(2+). Arginine 355 is an active-site residue.

Belongs to the peptidase M17 family. Mn(2+) serves as cofactor.

It is found in the cytoplasm. The catalysed reaction is Release of an N-terminal amino acid, Xaa-|-Yaa-, in which Xaa is preferably Leu, but may be other amino acids including Pro although not Arg or Lys, and Yaa may be Pro. Amino acid amides and methyl esters are also readily hydrolyzed, but rates on arylamides are exceedingly low.. It catalyses the reaction Release of an N-terminal amino acid, preferentially leucine, but not glutamic or aspartic acids.. Presumably involved in the processing and regular turnover of intracellular proteins. Catalyzes the removal of unsubstituted N-terminal amino acids from various peptides. The chain is Probable cytosol aminopeptidase 2 (pepA2) from Shewanella oneidensis (strain ATCC 700550 / JCM 31522 / CIP 106686 / LMG 19005 / NCIMB 14063 / MR-1).